We begin with the raw amino-acid sequence, 1019 residues long: Katanin p80 WD40 repeat-containing subunit B1 homolog KTN80.1 (1019 aa).

7 WD repeats span residues 13–53, 56–95, 98–137, 140–181, 183–221, 224–264, and 266–303; these read AHSG…SPMS, GHTSPVDSVAFNSEEVLVLAGASSGVIKLWDLEESKMVRA, GHRSNCSAVEFHPFGEFLASGSSDTNLRVWDTRKKGCIQT, GHTR…HEFK, HEGPIRSLDFHPLEFLLATGSADRTVKFWDLETFELIGT, PEAT…DGVD, and GWSTLGDFCINEGKFIGCSYYRNSVGIWVSDISELEPY. The DWD box signature appears at 114–130; it reads FLASGSSDTNLRVWDTR. Disordered stretches follow at residues 388–424, 455–474, 517–581, and 607–652; these read FGPAGDKYSSTSRDSDSGEESSYSERESIPFSRTKSG, KSGLAVEEEPQTQNAFLSEQ, IHRS…GSRE, and RGEK…RARS. Over residues 465-474 the composition is skewed to polar residues; that stretch reads QTQNAFLSEQ. Residues 553 to 572 show a composition bias toward basic and acidic residues; that stretch reads IPSKTERVLSREKPGDEQKN. The span at 614–628 shows a compositional bias: polar residues; that stretch reads TEGASTTIEQNNNAV.

It belongs to the WD repeat KATNB1 family. Component of KTN80-KTN1 complexes composed of a hexamer of KTN1-KTN80 heterodimers that sense microtubule (MT) geometry to confer precise MT severing. Interacts directly with AAA1/KTN1 and KTN80.3, and weakly with KTN80.4. In terms of tissue distribution, expressed at low levels in siliques, flowers, leaves, stems and roots.

Its subcellular location is the cytoplasm. The protein resides in the cytoskeleton. Its function is as follows. May participate in a complex which severs microtubules in an ATP-dependent manner. Microtubule severing may promote rapid reorganization of cellular microtubule arrays. Confers precision to microtubule (MT) severing by specific targeting of KTN1 to MT cleavage sites such as crossover or branching nucleation sites. Together with other KTN80s, regulates cell elongation by modulating MT organization. The chain is Katanin p80 WD40 repeat-containing subunit B1 homolog KTN80.1 from Arabidopsis thaliana (Mouse-ear cress).